The primary structure comprises 323 residues: Dolichyl-phosphate beta-glucosyltransferase ALG5A (323 aa).

The Lumenal segment spans residues 1-5 (MKFWR). A helical membrane pass occupies residues 6–26 (FVQILFFLGVAAVGLVVAVMI). The Cytoplasmic portion of the chain corresponds to 27–323 (ANADDTTLFD…GAWKIRDRRH (297 aa)).

Belongs to the glycosyltransferase 2 family.

The protein localises to the endoplasmic reticulum membrane. The catalysed reaction is a di-trans,poly-cis-dolichyl phosphate + UDP-alpha-D-glucose = a di-trans,poly-cis-dolichyl beta-D-glucosyl phosphate + UDP. The protein operates within protein modification; protein glycosylation. In terms of biological role, dolichyl-phosphate beta-glucosyltransferase involved in the glycosylation of glycoproteins through the synthesis of dolichyl beta-D-glucosyl phosphate which serves as a sugar donor for transfer of three glucose residues to the Man-9-GlcNAc-2-PP-dolichol precursor to N-glycans. This chain is Dolichyl-phosphate beta-glucosyltransferase ALG5A, found in Trichomonas vaginalis (strain ATCC PRA-98 / G3).